Reading from the N-terminus, the 744-residue chain is Tripartite motif-containing protein 2 (744 aa).

The residue at position 10 (Ser10) is a Phosphoserine. An RING-type zinc finger spans residues 23 to 64; sequence CSICLERYKNPKVLPCLHTFCERCLQNYIPAHSLTLSCPVCR. A B box-type zinc finger spans residues 113 to 154; sequence GKPLSCPNHDGNVMDFYCQSCETAMCRECTEGEHAEHPTVPL. Residues Cys118, His121, Cys141, and His146 each coordinate Zn(2+). One copy of the Filamin repeat lies at 320–421; it reads TTNAVASETV…IRGSPFKLKV (102 aa). Residue Thr371 is modified to Phosphothreonine. Residues Ser375, Ser424, and Ser428 each carry the phosphoserine modification. The tract at residues 432–462 is disordered; that stretch reads EGVKRRVKSPGSGHVKQKAVKRPASMYSTGK. 6 NHL repeats span residues 473-516, 520-563, 564-605, 609-652, 656-699, and 700-743; these read IFRV…FSND, KSRF…FSSD, GKFK…FQPN, VTRF…FNQE, MLKF…FDGS, and GSFL…YRYL.

The protein belongs to the TRIM/RBCC family. In terms of assembly, forms homooligomers. Interacts with TRIM3; this interaction reduces TRIM2 activity. Interacts with myosin V; myosin V may not be a substrate for ubiquitination. Interacts with NEFL. Interacts with phosphorylated BCL2L11. Interacts with SIRPA. RING-type zinc finger-dependent and UBE2D1-dependent autoubiquitination.

It is found in the cytoplasm. The catalysed reaction is S-ubiquitinyl-[E2 ubiquitin-conjugating enzyme]-L-cysteine + [acceptor protein]-L-lysine = [E2 ubiquitin-conjugating enzyme]-L-cysteine + N(6)-ubiquitinyl-[acceptor protein]-L-lysine.. It functions in the pathway protein modification; protein ubiquitination. In terms of biological role, UBE2D1-dependent E3 ubiquitin-protein ligase that mediates the ubiquitination of NEFL and of phosphorylated BCL2L11. Plays a neuroprotective function. May play a role in neuronal rapid ischemic tolerance. Plays a role in antiviral immunity and limits New World arenavirus infection independently of its ubiquitin ligase activity. This chain is Tripartite motif-containing protein 2 (TRIM2), found in Bos taurus (Bovine).